The sequence spans 254 residues: Serine acetyltransferase (254 aa).

It belongs to the transferase hexapeptide repeat family.

The protein localises to the cytoplasm. It carries out the reaction L-serine + acetyl-CoA = O-acetyl-L-serine + CoA. It participates in amino-acid biosynthesis; L-cysteine biosynthesis; L-cysteine from L-serine: step 1/2. In Buchnera aphidicola subsp. Baizongia pistaciae (strain Bp), this protein is Serine acetyltransferase (cysE).